Consider the following 508-residue polypeptide: uncharacterized protein (508 aa).

12 consecutive transmembrane segments (helical) span residues 65-87 (IFPVMCLVYCIQFLDKTSNSYAV), 104-124 (WSGTAFYLGYLVFEFPASLLL), 136-156 (FLVIWGFLLCMTSVANYPGFI), 160-180 (VLLGMMESAASPGFILLTAQW), 192-212 (VWVAFNGLGQILGSCMAYGLA), 224-244 (LIFIICGVLAIFLGFVILAVV), 292-312 (TWIMFVSSVLLNIPNGGIGTF), 333-353 (LPAGACEFGGLIAFGFLSLFI), 357-377 (MVLATITTCIALIGSCLLSFA), 384-404 (LAGYYLLMVSPGAMIVMFAII), 416-436 (TVGVIYLIGYCVGNLIGPQTF), and 450-470 (TMVGCYAATLVTFPALYYVNW).

The protein belongs to the major facilitator superfamily. Allantoate permease family.

The protein localises to the endoplasmic reticulum. Its subcellular location is the golgi apparatus. The protein resides in the membrane. This is an uncharacterized protein from Schizosaccharomyces pombe (strain 972 / ATCC 24843) (Fission yeast).